The following is a 268-amino-acid chain: Cell division cycle-associated protein 3 (268 aa).

Disordered regions lie at residues 1-232 and 247-268; these read MGSA…SELK and GRAW…LVES. Serine 29 and serine 31 each carry phosphoserine. Position 37 is a phosphothreonine (threonine 37). A phosphoserine mark is found at serine 44, serine 64, and serine 68. The span at 56–66 shows a compositional bias: basic and acidic residues; that stretch reads EGLKHAQDSDP. At threonine 76 the chain carries Phosphothreonine. Residues serine 87 and serine 94 each carry the phosphoserine modification. The interval 91 to 120 is F-box-like; the sequence is KQLSEVFETEDSKSNLPPEPVLPPEAPLSS. The segment covering 107–116 has biased composition (pro residues); sequence PPEPVLPPEA. Low complexity predominate over residues 117–126; it reads PLSSELDLPL. Composition is skewed to polar residues over residues 128–149, 158–169, and 178–194; these read TQLS…SKQV, PTETPVASQSSD, and PRSS…NSSK. At serine 199 the chain carries Phosphoserine. Threonine 202 is subject to Phosphothreonine. Positions 205–215 are enriched in polar residues; that stretch reads QDDNSPGTLTL. Serine 209 bears the Phosphoserine mark. Threonine 212 bears the Phosphothreonine mark. Residues 258–260 carry the KEN box motif; it reads KEN.

In terms of assembly, interacts with SKP1. Part of a SCF (SKP1-cullin-F-box) protein ligase complex. Ubiquitinated and degraded by the APC/C-Cdh1 complex.

The protein localises to the cytoplasm. Its subcellular location is the cytosol. It functions in the pathway protein modification; protein ubiquitination. In terms of biological role, F-box-like protein which is required for entry into mitosis. Acts by participating in E3 ligase complexes that mediate the ubiquitination and degradation of WEE1 kinase at G2/M phase. The polypeptide is Cell division cycle-associated protein 3 (CDCA3) (Homo sapiens (Human)).